Here is a 352-residue protein sequence, read N- to C-terminus: Probable dual-specificity RNA methyltransferase RlmN (352 aa).

E99 functions as the Proton acceptor in the catalytic mechanism. Residues 105 to 325 (EGDRATLCIS…ESHGYTCTIR (221 aa)) enclose the Radical SAM core domain. An intrachain disulfide couples C112 to C336. Positions 119, 123, and 126 each coordinate [4Fe-4S] cluster. S-adenosyl-L-methionine contacts are provided by residues 164–165 (GE), S196, 217–219 (SLH), and H293. The active-site S-methylcysteine intermediate is the C336.

This sequence belongs to the radical SAM superfamily. RlmN family. [4Fe-4S] cluster serves as cofactor.

The protein localises to the cytoplasm. The enzyme catalyses adenosine(2503) in 23S rRNA + 2 reduced [2Fe-2S]-[ferredoxin] + 2 S-adenosyl-L-methionine = 2-methyladenosine(2503) in 23S rRNA + 5'-deoxyadenosine + L-methionine + 2 oxidized [2Fe-2S]-[ferredoxin] + S-adenosyl-L-homocysteine. The catalysed reaction is adenosine(37) in tRNA + 2 reduced [2Fe-2S]-[ferredoxin] + 2 S-adenosyl-L-methionine = 2-methyladenosine(37) in tRNA + 5'-deoxyadenosine + L-methionine + 2 oxidized [2Fe-2S]-[ferredoxin] + S-adenosyl-L-homocysteine. Specifically methylates position 2 of adenine 2503 in 23S rRNA and position 2 of adenine 37 in tRNAs. This is Probable dual-specificity RNA methyltransferase RlmN from Porphyromonas gingivalis (strain ATCC 33277 / DSM 20709 / CIP 103683 / JCM 12257 / NCTC 11834 / 2561).